A 193-amino-acid polypeptide reads, in one-letter code: Superoxide dismutase [Fe] (193 aa).

Positions 27, 74, 157, and 161 each coordinate Fe cation.

It belongs to the iron/manganese superoxide dismutase family. As to quaternary structure, homodimer. The cofactor is Fe cation.

It carries out the reaction 2 superoxide + 2 H(+) = H2O2 + O2. In terms of biological role, destroys superoxide anion radicals which are normally produced within the cells and which are toxic to biological systems. The sequence is that of Superoxide dismutase [Fe] (sodB) from Salmonella typhimurium (strain LT2 / SGSC1412 / ATCC 700720).